The sequence spans 65 residues: Large ribosomal subunit protein bL33m (65 aa).

Belongs to the bacterial ribosomal protein bL33 family. In terms of assembly, component of the mitochondrial ribosome large subunit (39S) which comprises a 16S rRNA and about 50 distinct proteins.

Its subcellular location is the mitochondrion. The chain is Large ribosomal subunit protein bL33m (mRpL33) from Anopheles gambiae (African malaria mosquito).